Here is a 363-residue protein sequence, read N- to C-terminus: Adenosine 3'-phospho 5'-phosphosulfate transporter 2 (363 aa).

Helical transmembrane passes span 39–59 (WLQF…YGYM), 63–83 (IFKL…QFVI), 106–126 (IYGV…ASVG), 131–151 (PTQV…GILI), 157–177 (GWID…FTLA), 187–206 (SRGY…IGNI), 231–251 (VFIF…PFFL), 257–277 (TFGY…VVLT), 281–301 (VFGA…TIIL), and 310–330 (FTIE…LNLY).

The protein belongs to the nucleotide-sugar transporter family. SLC35B subfamily.

It is found in the golgi apparatus membrane. Functionally, mediates the transport of adenosine 3'-phospho 5'-phosphosulfate (PAPS), from cytosol into Golgi. PAPS is a universal sulfuryl donor for sulfation events that take place in the Golgi. This is Adenosine 3'-phospho 5'-phosphosulfate transporter 2 (pst-2) from Caenorhabditis briggsae.